The following is a 194-amino-acid chain: HTH-type transcriptional regulator BetI (194 aa).

An HTH tetR-type domain is found at 8 to 68 (EIRRAQLIDA…ATMRHVLRDL (61 aa)). The segment at residues 31 to 50 (TLASVAQRANISTGIVSHYF) is a DNA-binding region (H-T-H motif).

The protein operates within amine and polyamine biosynthesis; betaine biosynthesis via choline pathway [regulation]. Repressor involved in the biosynthesis of the osmoprotectant glycine betaine. It represses transcription of the choline transporter BetT and the genes of BetAB involved in the synthesis of glycine betaine. This Burkholderia ambifaria (strain MC40-6) protein is HTH-type transcriptional regulator BetI.